An 892-amino-acid polypeptide reads, in one-letter code: UPF0182 protein MCA2716 (892 aa).

The next 7 helical transmembrane spans lie at 7-27 (LLTS…AIVL), 57-77 (ILSG…FWAA), 107-127 (GALP…ALPF), 163-183 (ILVL…VMVA), 206-226 (IHLN…YVLQ), 252-272 (LPLI…ALWF), and 281-301 (LALT…IDVV).

This sequence belongs to the UPF0182 family.

Its subcellular location is the cell membrane. The chain is UPF0182 protein MCA2716 from Methylococcus capsulatus (strain ATCC 33009 / NCIMB 11132 / Bath).